A 208-amino-acid polypeptide reads, in one-letter code: Redox-sensing transcriptional repressor Rex (208 aa).

Positions 16–55 (LYYRCLSELNEKGEDKVSSAVLERLLKIDAATVRRDFSYF) form a DNA-binding region, H-T-H motif. 90-95 (GVGNLG) contacts NAD(+).

It belongs to the transcriptional regulatory Rex family. In terms of assembly, homodimer.

Its subcellular location is the cytoplasm. In terms of biological role, modulates transcription in response to changes in cellular NADH/NAD(+) redox state. In Pediococcus pentosaceus (strain ATCC 25745 / CCUG 21536 / LMG 10740 / 183-1w), this protein is Redox-sensing transcriptional repressor Rex.